Consider the following 248-residue polypeptide: Probable phosphatase VS_II0429 (248 aa).

The Zn(2+) site is built by His-8, His-10, His-16, His-41, Glu-74, His-102, His-132, Asp-194, and His-196.

This sequence belongs to the PHP family. It depends on Zn(2+) as a cofactor.

This Vibrio atlanticus (strain LGP32) (Vibrio splendidus (strain Mel32)) protein is Probable phosphatase VS_II0429.